The following is a 317-amino-acid chain: Glycerol-3-phosphate dehydrogenase [NAD(P)+] (317 aa).

NADPH contacts are provided by Ser-14, Phe-15, Arg-35, and Lys-109. Lys-109 and Gly-137 together coordinate sn-glycerol 3-phosphate. Residue Ala-141 coordinates NADPH. Positions 192, 248, 258, 259, and 260 each coordinate sn-glycerol 3-phosphate. Lys-192 serves as the catalytic Proton acceptor. Arg-259 contributes to the NADPH binding site. 2 residues coordinate NADPH: Leu-283 and Glu-285.

It belongs to the NAD-dependent glycerol-3-phosphate dehydrogenase family.

The protein localises to the cytoplasm. It catalyses the reaction sn-glycerol 3-phosphate + NAD(+) = dihydroxyacetone phosphate + NADH + H(+). It carries out the reaction sn-glycerol 3-phosphate + NADP(+) = dihydroxyacetone phosphate + NADPH + H(+). It functions in the pathway membrane lipid metabolism; glycerophospholipid metabolism. Its function is as follows. Catalyzes the reduction of the glycolytic intermediate dihydroxyacetone phosphate (DHAP) to sn-glycerol 3-phosphate (G3P), the key precursor for phospholipid synthesis. The sequence is that of Glycerol-3-phosphate dehydrogenase [NAD(P)+] from Rickettsia akari (strain Hartford).